The chain runs to 90 residues: Leech factor Xa inhibitor (90 aa).

It localises to the secreted. Its function is as follows. Potent anticoagulant inhibiting the amidolytic activity of factor Xa (F10) (Ki=4nM) and reducing its ability to activate prothrombin (F2) in the prothrombinase complex (EC(50)=40nM). The chain is Leech factor Xa inhibitor from Haementeria depressa (Leech).